Here is a 500-residue protein sequence, read N- to C-terminus: Glutathione gamma-glutamylcysteinyltransferase 1 (500 aa).

One can recognise a Peptidase C83 domain in the interval 1–221; that stretch reads MEVASLYRRV…GFMLVSRRSS (221 aa). Residues Cys56, His162, and Asp180 contribute to the active site.

It belongs to the phytochelatin synthase family. As to expression, expressed in roots and shoots.

It catalyses the reaction [Glu(-Cys)](n)-Gly + glutathione + H(+) = [Glu(-Cys)](n+1)-Gly + glycine. With respect to regulation, requires cadmium for activity. Functionally, involved in the synthesis of phytochelatins (PC) and homophytochelatins (hPC), the heavy-metal-binding peptides of plants. This is Glutathione gamma-glutamylcysteinyltransferase 1 (PCS1) from Triticum aestivum (Wheat).